A 420-amino-acid chain; its full sequence is Serine hydroxymethyltransferase (420 aa).

(6S)-5,6,7,8-tetrahydrofolate-binding positions include Leu117 and 121-123 (GHL). Lys226 is modified (N6-(pyridoxal phosphate)lysine).

The protein belongs to the SHMT family. In terms of assembly, homodimer. Pyridoxal 5'-phosphate is required as a cofactor.

The protein localises to the cytoplasm. It carries out the reaction (6R)-5,10-methylene-5,6,7,8-tetrahydrofolate + glycine + H2O = (6S)-5,6,7,8-tetrahydrofolate + L-serine. It participates in one-carbon metabolism; tetrahydrofolate interconversion. The protein operates within amino-acid biosynthesis; glycine biosynthesis; glycine from L-serine: step 1/1. Catalyzes the reversible interconversion of serine and glycine with tetrahydrofolate (THF) serving as the one-carbon carrier. This reaction serves as the major source of one-carbon groups required for the biosynthesis of purines, thymidylate, methionine, and other important biomolecules. Also exhibits THF-independent aldolase activity toward beta-hydroxyamino acids, producing glycine and aldehydes, via a retro-aldol mechanism. This chain is Serine hydroxymethyltransferase, found in Rhodopirellula baltica (strain DSM 10527 / NCIMB 13988 / SH1).